The following is a 1413-amino-acid chain: MKALLDLFKQVQQEEVFDAIKIGLASPDKIRSWSFGEVKKPETINYRTFKPERDGLFCAKIFGPIKDYECLCGKYKRLKHRGVICEKCGVEVTLAKVRRERMGHIELASPVAHIWFLKSLPSRLGMVLDMTLRDIERVLYFEAYVVIDPGMTPLKARQIMTEEDYYNKVEEYGDEFRAEMGAEGVRELLRAINIDEQVEQLRTELKNTGSEAKIKKYAKRLKVLEAFQRSGIKPEWMILEVLPVLPPELRPLVPLDGGRFATSDLNDLYRRVINRNNRLKRLLELKAPEIIVRNEKRMLQEAVDSLLDNGRRGKAMTGANKRPLKSLADMIKGKGGRFRQNLLGKRVDYSGRSVIVVGPTLKLHQCGLPKLMALELFKPFIFNKLEVMGVATTIKAAKKEVENQTPVVWDILEEVIREHPVMLNRAPTLHRLGIQAFEPVLIEGKAIQLHPLVCAAFNADFDGDQMAVHVPLSLEAQMEARTLMLASNNVLFPANGDPSIVPSQDIVLGLYYATREAINGKGEGLTFTGVSEVIRAYENKEVELASRVNVRITEMVRNEDKSEGAPEFVPKISLYATTVGRAILSEILPPGLPFSVLNKPLKKKEISRLINTAFRKCGLRATVVFADQLMQSGFRLATRAGISICVDDMLVPPQKETIVGDAAKKVKEYDRQYMSGLVTAQERYNNVVDIWSATSEAVGKAMMEQLSTEPVIDRDGNETRQESFNSIYMMADSGARGSAVQIRQLAGMRGLMAKPDGSIIETPITANFREGLNVLQYFISTHGARKGLADTALKTANSGYLTRRLVDVTQDLVVVEDDCGTSNGVAMKALVEGGEVVEALRDRILGRVAVADVVNPETQETLYEAGTLLDETAVEEIERLGIDEVRVRTPLTCETRYGLCASCYGRDLGRGTLVNVGEAVGVIAAQSIGEPGTQLTMRTFHIGGAASRAAVASSVEAKSNGTVRFSPSMRYVTNAKGEQIVISRSGEALITDDIGRERERHKIPYGATLLQLDGAAIKAGTQLATWDPMTRPIITEYGGTVKFENVEEGVTVAKQIDDVTGLSTLVVIDAKRRGSQASKSVRPQVKLLDANGDEVKIPGTEHSVQIGFQVGALITVKDGQQVQVGEVLARIPTESQKTRDITGGLPRVAELFEARSPKDAGILAEVTGTVSFGKDTKGKQRLVITDLEGNQHEFLIAKEKQVLVHDGQVVNKGEMIVDGPADPHDILRLQGIEALSRYIVDEVQDVYRLQGVKINDKHIEVIVRQMLRRVQITDNGDSRFIPGEQVERSDMLDENDRMIAEGKRPASYENVLLGITKASLSTDSFISAASFQETTRVLTEAAIMGKRDDLRGLKENVIVGRLIPAGTGLAFHKARKAKEMSDRERFDQIAAEEAFDFGTPSTPAEEPQHPAAE.

Zn(2+)-binding residues include Cys70, Cys72, Cys85, and Cys88. Mg(2+)-binding residues include Asp460, Asp462, and Asp464. 4 residues coordinate Zn(2+): Cys819, Cys893, Cys900, and Cys903.

This sequence belongs to the RNA polymerase beta' chain family. As to quaternary structure, the RNAP catalytic core consists of 2 alpha, 1 beta, 1 beta' and 1 omega subunit. When a sigma factor is associated with the core the holoenzyme is formed, which can initiate transcription. The cofactor is Mg(2+). It depends on Zn(2+) as a cofactor.

The catalysed reaction is RNA(n) + a ribonucleoside 5'-triphosphate = RNA(n+1) + diphosphate. DNA-dependent RNA polymerase catalyzes the transcription of DNA into RNA using the four ribonucleoside triphosphates as substrates. The polypeptide is DNA-directed RNA polymerase subunit beta' (Burkholderia multivorans (strain ATCC 17616 / 249)).